Here is a 124-residue protein sequence, read N- to C-terminus: Glycine cleavage system H protein (124 aa).

A Lipoyl-binding domain is found at 19-101 (VATVGITNHA…EGEGWLFKME (83 aa)). Lysine 60 carries the N6-lipoyllysine modification.

This sequence belongs to the GcvH family. The glycine cleavage system is composed of four proteins: P, T, L and H. (R)-lipoate is required as a cofactor.

In terms of biological role, the glycine cleavage system catalyzes the degradation of glycine. The H protein shuttles the methylamine group of glycine from the P protein to the T protein. The protein is Glycine cleavage system H protein of Thermotoga maritima (strain ATCC 43589 / DSM 3109 / JCM 10099 / NBRC 100826 / MSB8).